The sequence spans 425 residues: Neuromedin-U receptor 1 (425 aa).

At M1–Q59 the chain is on the extracellular side. N41 is a glycosylation site (N-linked (GlcNAc...) asparagine). Residues F60–L80 traverse the membrane as a helical segment. The Cytoplasmic portion of the chain corresponds to T81 to N96. A helical transmembrane segment spans residues F97–E117. Over L118 to R137 the chain is Extracellular. C134 and C219 are disulfide-bonded. The helical transmembrane segment at I138–E158 threads the bilayer. Topologically, residues R159 to M181 are cytoplasmic. A helical membrane pass occupies residues L182–L202. Residues S203–T235 lie on the Extracellular side of the membrane. A helical membrane pass occupies residues I236–L256. Residues R257–Q294 are Cytoplasmic-facing. The chain crosses the membrane as a helical span at residues V295 to A315. The Extracellular portion of the chain corresponds to D316–R331. Residues L332–N352 traverse the membrane as a helical segment. Over P353 to E425 the chain is Cytoplasmic. Positions D406–E425 are disordered.

It belongs to the G-protein coupled receptor 1 family. Highly expressed in the small intestine and lung. Low expression in the central nervous system.

Its subcellular location is the cell membrane. Receptor for the neuromedin-U and neuromedin-S neuropeptides. This chain is Neuromedin-U receptor 1 (Nmur1), found in Rattus norvegicus (Rat).